A 112-amino-acid chain; its full sequence is Integration host factor subunit alpha (112 aa).

This sequence belongs to the bacterial histone-like protein family. As to quaternary structure, heterodimer of an alpha and a beta chain.

Its function is as follows. This protein is one of the two subunits of integration host factor, a specific DNA-binding protein that functions in genetic recombination as well as in transcriptional and translational control. This is Integration host factor subunit alpha from Rhizobium johnstonii (strain DSM 114642 / LMG 32736 / 3841) (Rhizobium leguminosarum bv. viciae).